The following is a 51-amino-acid chain: uncharacterized protein (51 aa).

It to E.coli YdaF.

This is an uncharacterized protein from Escherichia coli O157:H7.